We begin with the raw amino-acid sequence, 296 residues long: HTH-type transcriptional activator AmpR (296 aa).

The HTH lysR-type domain occupies 6–63 (LPLNALRAFEASARHLSFTRAAIELCVTQAAVSHQVKSLEERLGVALFKRLPRGLMLT). The segment at residues 23–42 (FTRAAIELCVTQAAVSHQVK) is a DNA-binding region (H-T-H motif). The includes the LysR substrate-binding / effector-binding domain, involved in binding to specific cell-wall-derived muropeptide products, some of which have signaling functions, leading to disparate responses such as antibiotic resistance, virulence, and host cell inflammation stretch occupies residues 83 to 296 (LLERFEGGHY…EMAAVEARGR (214 aa)). The region spanning 91–289 (HYRDVLTVGA…AFRGWLLEMA (199 aa)) is the LysR substrate-binding domain.

It belongs to the LysR transcriptional regulatory family. Homodimer.

The protein resides in the cytoplasm. Its subcellular location is the membrane. Functionally, transcription regulator that plays a critical role in the expression of beta-lactamase AmpC, acting by positive regulation of the ampC gene. Has a wider role in the regulation of expression of genes involved in proteolysis, quorum sensing, and virulence. Acts by binding directly to the promoter region of the ampC gene. Probably does not regulate transcription of its own gene. This Pseudomonas aeruginosa (strain ATCC 15692 / DSM 22644 / CIP 104116 / JCM 14847 / LMG 12228 / 1C / PRS 101 / PAO1) protein is HTH-type transcriptional activator AmpR (ampR).